A 223-amino-acid polypeptide reads, in one-letter code: ATP phosphoribosyltransferase (223 aa).

This sequence belongs to the ATP phosphoribosyltransferase family. Short subfamily. In terms of assembly, heteromultimer composed of HisG and HisZ subunits.

Its subcellular location is the cytoplasm. It carries out the reaction 1-(5-phospho-beta-D-ribosyl)-ATP + diphosphate = 5-phospho-alpha-D-ribose 1-diphosphate + ATP. Its pathway is amino-acid biosynthesis; L-histidine biosynthesis; L-histidine from 5-phospho-alpha-D-ribose 1-diphosphate: step 1/9. Catalyzes the condensation of ATP and 5-phosphoribose 1-diphosphate to form N'-(5'-phosphoribosyl)-ATP (PR-ATP). Has a crucial role in the pathway because the rate of histidine biosynthesis seems to be controlled primarily by regulation of HisG enzymatic activity. The polypeptide is ATP phosphoribosyltransferase (Desulfitobacterium hafniense (strain Y51)).